The chain runs to 150 residues: Macrodomain Ter protein (150 aa).

This sequence belongs to the MatP family. Homodimer.

Its subcellular location is the cytoplasm. In terms of biological role, required for spatial organization of the terminus region of the chromosome (Ter macrodomain) during the cell cycle. Prevents early segregation of duplicated Ter macrodomains during cell division. Binds specifically to matS, which is a 13 bp signature motif repeated within the Ter macrodomain. The sequence is that of Macrodomain Ter protein from Escherichia coli O81 (strain ED1a).